The following is a 252-amino-acid chain: 4-hydroxy-tetrahydrodipicolinate reductase (252 aa).

NAD(+) contacts are provided by residues 8–13, 84–86, and 108–111; these read GCCGKM, CST, and SANM. The active-site Proton donor/acceptor is H141. H142 is a (S)-2,3,4,5-tetrahydrodipicolinate binding site. The active-site Proton donor is the K145. 151–152 is a binding site for (S)-2,3,4,5-tetrahydrodipicolinate; it reads GT.

Belongs to the DapB family.

The protein localises to the cytoplasm. The catalysed reaction is (S)-2,3,4,5-tetrahydrodipicolinate + NAD(+) + H2O = (2S,4S)-4-hydroxy-2,3,4,5-tetrahydrodipicolinate + NADH + H(+). The enzyme catalyses (S)-2,3,4,5-tetrahydrodipicolinate + NADP(+) + H2O = (2S,4S)-4-hydroxy-2,3,4,5-tetrahydrodipicolinate + NADPH + H(+). The protein operates within amino-acid biosynthesis; L-lysine biosynthesis via DAP pathway; (S)-tetrahydrodipicolinate from L-aspartate: step 4/4. Catalyzes the conversion of 4-hydroxy-tetrahydrodipicolinate (HTPA) to tetrahydrodipicolinate. This is 4-hydroxy-tetrahydrodipicolinate reductase from Clostridium botulinum (strain Eklund 17B / Type B).